A 222-amino-acid chain; its full sequence is 7-cyano-7-deazaguanine synthase (222 aa).

ATP is bound at residue 7–17 (LSGGMDSAVAT). Positions 188, 196, 199, and 202 each coordinate Zn(2+).

This sequence belongs to the QueC family. It depends on Zn(2+) as a cofactor.

It catalyses the reaction 7-carboxy-7-deazaguanine + NH4(+) + ATP = 7-cyano-7-deazaguanine + ADP + phosphate + H2O + H(+). Its pathway is purine metabolism; 7-cyano-7-deazaguanine biosynthesis. Functionally, catalyzes the ATP-dependent conversion of 7-carboxy-7-deazaguanine (CDG) to 7-cyano-7-deazaguanine (preQ(0)). This chain is 7-cyano-7-deazaguanine synthase, found in Methanothermobacter thermautotrophicus (strain ATCC 29096 / DSM 1053 / JCM 10044 / NBRC 100330 / Delta H) (Methanobacterium thermoautotrophicum).